Consider the following 1237-residue polypeptide: Glutamate receptor ionotropic, NMDA 2C (1237 aa).

The N-terminal stretch at 1–19 is a signal peptide; sequence MGGALGPALLLTSLLGAWA. The Extracellular segment spans residues 20-554; that stretch reads RLGAGQGEQA…SAFLEPYSPA (535 aa). N-linked (GlcNAc...) asparagine glycans are attached at residues Asn-70 and Asn-73. Cysteines 82 and 317 form a disulfide. N-linked (GlcNAc...) asparagine glycans are attached at residues Asn-337 and Asn-438. Intrachain disulfides connect Cys-426/Cys-453 and Cys-433/Cys-454. L-glutamate is bound by residues Ser-509, Thr-511, and Arg-516. N-linked (GlcNAc...) asparagine glycosylation occurs at Asn-539. The helical transmembrane segment at 555 to 575 threads the bilayer; the sequence is VWVMMFVMCLTVVAITVFMFE. At 576-601 the chain is on the cytoplasmic side; it reads YFSPVSYNQNLTKGKKPGGPSFTIGK. A pore-forming region spans residues 601-620; sequence KSVWLLWALVFNNSVPIENP. The segment at residues 602 to 611 is an intramembrane region (discontinuously helical); the sequence is SVWLLWALVF. Residues 612 to 622 lie on the Cytoplasmic side of the membrane; that stretch reads NNSVPIENPRG. The helical transmembrane segment at 623–644 threads the bilayer; sequence TTSKIMVLVWAFFAVIFLASYT. Residues 645–813 are Extracellular-facing; sequence ANLAAFMIQE…EVMSSKLDID (169 aa). N-linked (GlcNAc...) asparagine glycosylation is present at Asn-685. Ser-687, Thr-688, and Asp-729 together coordinate L-glutamate. Cys-743 and Cys-798 form a disulfide bridge. Residues 814-833 form a helical membrane-spanning segment; sequence NMAGVFYMLLVAMGLALLVF. Topologically, residues 834–1237 are cytoplasmic; it reads AWEHLVYWKL…RRVSSLESEV (404 aa). Residues Ser-875, Ser-881, and Ser-912 each carry the phosphoserine modification. The span at 907-925 shows a compositional bias: polar residues; sequence ADVSSSLDRATRTIENWGN. A disordered region spans residues 907–990; it reads ADVSSSLDRA…LPDVSRPSCR (84 aa). The segment covering 930–941 has biased composition (low complexity); that stretch reads PAPTASGPRSST. Over residues 968–982 the composition is skewed to pro residues; it reads PQPPARPATCGPPLP. The PDZ-binding signature appears at 1235–1237; the sequence is SEV.

The protein belongs to the glutamate-gated ion channel (TC 1.A.10.1) family. NR2C/GRIN2C subfamily. As to quaternary structure, heterotetramer. Forms heterotetrameric channels composed of two GluN1/zeta subunits (GRIN1), and two identical GluN2/epsilon subunits (GRIN2A, GRIN2B, GRIN2C or GRIN2D) or GluN3 subunits (GRIN3A or GRIN3B) (in vitro). In vivo, the subunit composition may depend on the expression levels of the different subunits. Interacts with PDZ domains of PATJ and DLG4. Interacts (via PDZ-binding motif) with SNX27 (via PDZ domain); the interaction is required for recycling to the plasma membrane when endocytosed and prevent degradation in lysosomes. In terms of tissue distribution, detected in cerebellum.

The protein localises to the cell membrane. It localises to the postsynaptic cell membrane. The enzyme catalyses Ca(2+)(in) = Ca(2+)(out). It carries out the reaction Na(+)(in) = Na(+)(out). It catalyses the reaction K(+)(in) = K(+)(out). Component of N-methyl-D-aspartate (NMDA) receptors (NMDARs) that function as heterotetrameric, ligand-gated cation channels with high calcium permeability and voltage-dependent block by Mg(2+). Participates in synaptic plasticity for learning and memory formation by contributing to the slow phase of excitatory postsynaptic current and long-term synaptic potentiation. Channel activation requires binding of the neurotransmitter L-glutamate to the GluN2 subunit, glycine or D-serine binding to the GluN1 subunit, plus membrane depolarization to eliminate channel inhibition by Mg(2+). NMDARs mediate simultaneously the potasium efflux and the influx of calcium and sodium. Each GluN2 subunit confers differential attributes to channel properties, including activation, deactivation and desensitization kinetics, pH sensitivity, Ca2(+) permeability, and binding to allosteric modulators. The polypeptide is Glutamate receptor ionotropic, NMDA 2C (Rattus norvegicus (Rat)).